The following is a 227-amino-acid chain: Cytochrome c oxidase subunit 2 (227 aa).

At 1-14 (MAYPFQLGLQDATS) the chain is on the mitochondrial intermembrane side. The chain crosses the membrane as a helical span at residues 15-45 (PIMEELLHFHDHTLMIVFLISSLVLYIISLM). Residues 46–59 (LTTKLTHTSTMDAQ) are Mitochondrial matrix-facing. The chain crosses the membrane as a helical span at residues 60-87 (EVETVWTILPAIILILIALLSLRILYMM). Over 88 to 227 (DEINNPFLTM…YFETWSALMV (140 aa)) the chain is Mitochondrial intermembrane. Cu cation is bound by residues H161, C196, E198, C200, H204, and M207. E198 serves as a coordination point for Mg(2+). A Phosphotyrosine modification is found at Y218.

It belongs to the cytochrome c oxidase subunit 2 family. Component of the cytochrome c oxidase (complex IV, CIV), a multisubunit enzyme composed of 14 subunits. The complex is composed of a catalytic core of 3 subunits MT-CO1, MT-CO2 and MT-CO3, encoded in the mitochondrial DNA, and 11 supernumerary subunits COX4I, COX5A, COX5B, COX6A, COX6B, COX6C, COX7A, COX7B, COX7C, COX8 and NDUFA4, which are encoded in the nuclear genome. The complex exists as a monomer or a dimer and forms supercomplexes (SCs) in the inner mitochondrial membrane with NADH-ubiquinone oxidoreductase (complex I, CI) and ubiquinol-cytochrome c oxidoreductase (cytochrome b-c1 complex, complex III, CIII), resulting in different assemblies (supercomplex SCI(1)III(2)IV(1) and megacomplex MCI(2)III(2)IV(2)). Found in a complex with TMEM177, COA6, COX18, COX20, SCO1 and SCO2. Interacts with TMEM177 in a COX20-dependent manner. Interacts with COX20. Interacts with COX16. The cofactor is Cu cation.

Its subcellular location is the mitochondrion inner membrane. The enzyme catalyses 4 Fe(II)-[cytochrome c] + O2 + 8 H(+)(in) = 4 Fe(III)-[cytochrome c] + 2 H2O + 4 H(+)(out). In terms of biological role, component of the cytochrome c oxidase, the last enzyme in the mitochondrial electron transport chain which drives oxidative phosphorylation. The respiratory chain contains 3 multisubunit complexes succinate dehydrogenase (complex II, CII), ubiquinol-cytochrome c oxidoreductase (cytochrome b-c1 complex, complex III, CIII) and cytochrome c oxidase (complex IV, CIV), that cooperate to transfer electrons derived from NADH and succinate to molecular oxygen, creating an electrochemical gradient over the inner membrane that drives transmembrane transport and the ATP synthase. Cytochrome c oxidase is the component of the respiratory chain that catalyzes the reduction of oxygen to water. Electrons originating from reduced cytochrome c in the intermembrane space (IMS) are transferred via the dinuclear copper A center (CU(A)) of subunit 2 and heme A of subunit 1 to the active site in subunit 1, a binuclear center (BNC) formed by heme A3 and copper B (CU(B)). The BNC reduces molecular oxygen to 2 water molecules using 4 electrons from cytochrome c in the IMS and 4 protons from the mitochondrial matrix. This is Cytochrome c oxidase subunit 2 (MT-CO2) from Nyctereutes procyonoides (Raccoon dog).